We begin with the raw amino-acid sequence, 109 residues long: Anther-specific protein MZm3-3 (109 aa).

The signal sequence occupies residues 1–41; sequence MTATTTTAAGGGKVQPRGLPVALSLLLLLVLAAGLGGGAEA. 4 disulfide bridges follow: C45–C86, C55–C75, C76–C101, and C88–C108.

This sequence belongs to the A9/FIL1 family. As to expression, tapetum of anthers.

Its subcellular location is the secreted. The polypeptide is Anther-specific protein MZm3-3 (Zea mays (Maize)).